The chain runs to 725 residues: MSKGMETVTSLVSGPPNNLKKGGNRNVPVAGISGTIRPYSSIVSGSSASGSAPVRVSAPGPQAVRPVSRPFTAPHTLHFSKGCWNIVTFNSSDAETNRLVDLCITDVIKDHALTAKVDNMRFELDENDLKKLSAPVREKLSNIGIIDPANSDSAELSGLVVVKTKLDSVIYPNTMFLPGGVGFLASLPDVSGYFAEVLERMPVQTLNSSLYYERTWIDGMFEKFGKNFASNEHGKRNKTLTSVLRDITTLADQGVTVACPIHSDVMLRSLSPSDPVYYAKGDQGCFKSHRMVFTKAPVSKCGICSTLKMALASSMNVDWRSQVNIHPARLMSTAYRYVATVAIAHYGKNRLAESNIRSTDHATVVNMIVDMVSKSTELTALGVTVANVNVRSRYRRAIMIPVGESYHICVTAITTLLARCFGELNEWGYLGVDLISQNGRVQIRTGLDVVNCSLVAGVPVTKKWNTASTMDNILEMKTITYPIYNDAVVETFETLLAQQFEREINAAVARDDCVNIKKNGEDERYNFKAKSPEIIYRSIRQMVKAGTSMTKMMGEAIERLVSSERTEGMRSVNSIAISIIVKMRMEKSKDKSKTQITSGEEKKLPPLFLITPQYEINLAEIRKAVERSSKDFVPIKMEKTAEETSKDIENHVLKSLNAQASMSWADEVEMFDNEENQKQELDAKSDDVEESSVEGEEDDDGSSASEETDTYSNDNAAAASPTKDE.

Disordered stretches follow at residues 1–26 and 666–725; these read MSKG…GNRN and DEVE…TKDE. The span at 7-16 shows a compositional bias: polar residues; sequence TVTSLVSGPP. The span at 675–686 shows a compositional bias: basic and acidic residues; that stretch reads ENQKQELDAKSD. Over residues 687 to 709 the composition is skewed to acidic residues; that stretch reads DVEESSVEGEEDDDGSSASEETD.

The polypeptide is Non-structural protein 4 (Rice gall dwarf virus (RGDV)).